Consider the following 93-residue polypeptide: UPF0358 protein lwe1048 (93 aa).

The protein belongs to the UPF0358 family.

In Listeria welshimeri serovar 6b (strain ATCC 35897 / DSM 20650 / CCUG 15529 / CIP 8149 / NCTC 11857 / SLCC 5334 / V8), this protein is UPF0358 protein lwe1048.